A 185-amino-acid chain; its full sequence is Ribosome-recycling factor (185 aa).

The protein belongs to the RRF family.

The protein resides in the cytoplasm. In terms of biological role, responsible for the release of ribosomes from messenger RNA at the termination of protein biosynthesis. May increase the efficiency of translation by recycling ribosomes from one round of translation to another. The protein is Ribosome-recycling factor of Actinobacillus succinogenes (strain ATCC 55618 / DSM 22257 / CCUG 43843 / 130Z).